Here is a 459-residue protein sequence, read N- to C-terminus: MTAANKNIVFGFSRSISAILLICFFFEKVCGDMEHDMGMDDTSGYTRPEIVQAGSKSFHWLCTLGFLLLLPSVVTCLSFAGRIYSATLLQCTCAVYAFLEAAVLRFQDNDGVENRTSRGTAWFLVGLTWITLFFGGLAGGTGFLVKSKRLQTFISNAGEKRLSYIHRGLSFLTVLTGWVKVCLAPVALFGFCREAHTGQCIAHGIMGSAFVLYGFIYVLVLVIPWIRSAQTSYSQDYVDSWVMCIWGVVNTFTEHRWGREGWSVHDYQHTFMGIIWWTGGILGIFLSRNGRRTFVPSLIIIFTGWAMSEHAQHLIISTKVHNMFGLVLMCGGALRIIEISFLLRDKRTLDKIHSFQYLAPFCLVCSGLLFMGANEEQLILVLRLGGDHSAYVLIIVSGAFLVYFWMIACLEFYLYLLEKGKQGFLPKSYELEEENNNVSFELDNISNEDVDEDTTPFNV.

Residues 1–6 (MTAANK) lie on the Extracellular side of the membrane. Residues 7–27 (NIVFGFSRSISAILLICFFFE) traverse the membrane as a helical segment. Topologically, residues 28 to 59 (KVCGDMEHDMGMDDTSGYTRPEIVQAGSKSFH) are cytoplasmic. Residues 60-80 (WLCTLGFLLLLPSVVTCLSFA) form a helical membrane-spanning segment. Over 81–82 (GR) the chain is Extracellular. Residues 83 to 103 (IYSATLLQCTCAVYAFLEAAV) traverse the membrane as a helical segment. Over 104–122 (LRFQDNDGVENRTSRGTAW) the chain is Cytoplasmic. A helical transmembrane segment spans residues 123–143 (FLVGLTWITLFFGGLAGGTGF). Residues 144 to 170 (LVKSKRLQTFISNAGEKRLSYIHRGLS) lie on the Extracellular side of the membrane. A helical membrane pass occupies residues 171–191 (FLTVLTGWVKVCLAPVALFGF). Residues 192–205 (CREAHTGQCIAHGI) lie on the Cytoplasmic side of the membrane. Residues 206–226 (MGSAFVLYGFIYVLVLVIPWI) traverse the membrane as a helical segment. At 227 to 266 (RSAQTSYSQDYVDSWVMCIWGVVNTFTEHRWGREGWSVHD) the chain is on the extracellular side. Residues 267–287 (YQHTFMGIIWWTGGILGIFLS) form a helical membrane-spanning segment. The Cytoplasmic segment spans residues 288 to 295 (RNGRRTFV). The helical transmembrane segment at 296-316 (PSLIIIFTGWAMSEHAQHLII) threads the bilayer. The Extracellular segment spans residues 317–322 (STKVHN). Residues 323-343 (MFGLVLMCGGALRIIEISFLL) form a helical membrane-spanning segment. At 344–351 (RDKRTLDK) the chain is on the cytoplasmic side. The helical transmembrane segment at 352–372 (IHSFQYLAPFCLVCSGLLFMG) threads the bilayer. At 373-389 (ANEEQLILVLRLGGDHS) the chain is on the extracellular side. Residues 390-410 (AYVLIIVSGAFLVYFWMIACL) traverse the membrane as a helical segment. Over 411-459 (EFYLYLLEKGKQGFLPKSYELEEENNNVSFELDNISNEDVDEDTTPFNV) the chain is Cytoplasmic.

The protein localises to the membrane. This Saccharomyces cerevisiae (strain ATCC 204508 / S288c) (Baker's yeast) protein is Protein YTP1 (YTP1).